Reading from the N-terminus, the 550-residue chain is Proteasome-associated ATPase (550 aa).

Residues 9 to 48 (EELARRVASLSAQNERLAQILVEARSKIVGLQQQIDDLAQ) adopt a coiled-coil conformation. 233 to 238 (GCGKTL) is an ATP binding site. Residues 528–550 (KGEGKNPTPAKAIETPHNTGPYL) form a disordered region. The tract at residues 549 to 550 (YL) is docks into pockets in the proteasome alpha-ring.

Belongs to the AAA ATPase family. Homohexamer. Assembles into a hexameric ring structure that caps the 20S proteasome core. Strongly interacts with the prokaryotic ubiquitin-like protein Pup through a hydrophobic interface; the interacting region of ARC lies in its N-terminal coiled-coil domain. There is one Pup binding site per ARC hexamer ring. Upon ATP-binding, the C-terminus of ARC interacts with the alpha-rings of the proteasome core, possibly by binding to the intersubunit pockets.

It functions in the pathway protein degradation; proteasomal Pup-dependent pathway. ATPase which is responsible for recognizing, binding, unfolding and translocation of pupylated proteins into the bacterial 20S proteasome core particle. May be essential for opening the gate of the 20S proteasome via an interaction with its C-terminus, thereby allowing substrate entry and access to the site of proteolysis. Thus, the C-termini of the proteasomal ATPase may function like a 'key in a lock' to induce gate opening and therefore regulate proteolysis. The sequence is that of Proteasome-associated ATPase from Jonesia denitrificans (strain ATCC 14870 / DSM 20603 / BCRC 15368 / CIP 55.134 / JCM 11481 / NBRC 15587 / NCTC 10816 / Prevot 55134) (Listeria denitrificans).